Consider the following 120-residue polypeptide: Dihydroneopterin triphosphate 2'-epimerase (120 aa).

The protein belongs to the DHNA family. As to quaternary structure, homooctamer.

The enzyme catalyses 7,8-dihydroneopterin 3'-triphosphate = 7,8-dihydromonapterin 3'-triphosphate. In terms of biological role, catalyzes the epimerization of carbon 2' of the side chain of 7,8-dihydroneopterin triphosphate (H2NTP) to form 7,8-dihydromonapterin triphosphate (H2MTP). Is required for tetrahydromonapterin biosynthesis. The chain is Dihydroneopterin triphosphate 2'-epimerase (folX) from Escherichia coli O157:H7.